The sequence spans 404 residues: MKVLVINTGSSSFKYQLIDMPMEQVLVSGLVERIGEEVGQMVHKIYPNTSQEKKYTTTQPFSTHVEGMQAVVAELINPKHGILHSVKEIYAIGHRVVMGGETMKHPALINQHVKNIIRECAIFSPLHNLSHLAGIETAEELFPGIPNVAVFDSEFHQTMPKVAYLYPLPYDIYDDYKIRRYGFHGTSHRYVAQQTANFLNRPIKELNFITCHLGNGCSMTAIKNGKSIDTSMGLTPLDGLMMGTRCGDIDPAIVPFLIEKTEKSAKDVDELMNKQSGLKGICGMNDMRDIHEACAQGNAKAQLALDMFIYRIKKYLGAYYAILGHLDGIIFTAGIGENDTIVREKVCSGLENLGIFLDSSRNNTHSSTLRLISTDNSPIPIFVVPTNEELEIAKLTIQLVSNTQ.

Asn-7 is a binding site for Mg(2+). An ATP-binding site is contributed by Lys-14. Arg-95 provides a ligand contact to substrate. The active-site Proton donor/acceptor is the Asp-152. Residues 212–216, 286–288, and 334–338 each bind ATP; these read HLGNG, DMR, and GIGEN. Glu-388 is a Mg(2+) binding site.

This sequence belongs to the acetokinase family. As to quaternary structure, homodimer. Mg(2+) is required as a cofactor. It depends on Mn(2+) as a cofactor.

The protein localises to the cytoplasm. It catalyses the reaction acetate + ATP = acetyl phosphate + ADP. It participates in metabolic intermediate biosynthesis; acetyl-CoA biosynthesis; acetyl-CoA from acetate: step 1/2. In terms of biological role, catalyzes the formation of acetyl phosphate from acetate and ATP. Can also catalyze the reverse reaction. This Lawsonia intracellularis (strain PHE/MN1-00) protein is Acetate kinase.